We begin with the raw amino-acid sequence, 486 residues long: Protein nucleotidyltransferase YdiU (486 aa).

Residues G90, G92, R93, K113, D125, G126, R176, and R183 each contribute to the ATP site. Residue D252 is the Proton acceptor of the active site. Residues N253 and D262 each contribute to the Mg(2+) site. D262 lines the ATP pocket.

This sequence belongs to the SELO family. Mg(2+) is required as a cofactor. It depends on Mn(2+) as a cofactor.

The enzyme catalyses L-seryl-[protein] + ATP = 3-O-(5'-adenylyl)-L-seryl-[protein] + diphosphate. It carries out the reaction L-threonyl-[protein] + ATP = 3-O-(5'-adenylyl)-L-threonyl-[protein] + diphosphate. It catalyses the reaction L-tyrosyl-[protein] + ATP = O-(5'-adenylyl)-L-tyrosyl-[protein] + diphosphate. The catalysed reaction is L-histidyl-[protein] + UTP = N(tele)-(5'-uridylyl)-L-histidyl-[protein] + diphosphate. The enzyme catalyses L-seryl-[protein] + UTP = O-(5'-uridylyl)-L-seryl-[protein] + diphosphate. It carries out the reaction L-tyrosyl-[protein] + UTP = O-(5'-uridylyl)-L-tyrosyl-[protein] + diphosphate. Its function is as follows. Nucleotidyltransferase involved in the post-translational modification of proteins. It can catalyze the addition of adenosine monophosphate (AMP) or uridine monophosphate (UMP) to a protein, resulting in modifications known as AMPylation and UMPylation. The polypeptide is Protein nucleotidyltransferase YdiU (Pseudomonas putida (strain ATCC 47054 / DSM 6125 / CFBP 8728 / NCIMB 11950 / KT2440)).